We begin with the raw amino-acid sequence, 259 residues long: Light-harvesting complex stress-related protein 3.1, chloroplastic (259 aa).

Residues M1–A45 constitute a chloroplast transit peptide. Chlorophyll b is bound at residue Y51. Residues F66, E87, and H90 each contribute to the chlorophyll a site. R92 lines the chlorophyll b pocket. A helical membrane pass occupies residues V93–F113. Q130 is a binding site for chlorophyll a. The helical transmembrane segment at E137–T157 threads the bilayer. Residues E147 and R150 each coordinate chlorophyll b. K196, E197, N200, R202, and Q214 together coordinate chlorophyll a. A helical membrane pass occupies residues L203 to F223.

The protein belongs to the light-harvesting chlorophyll a/b-binding (LHC) protein family. In terms of assembly, interacts with the photosystem II-light-harvesting complex II (PSII-LHCII) supercomplex to form PSII-LHCII-LHCSR3 supercomplex.

The protein resides in the plastid. It localises to the chloroplast thylakoid membrane. Required for non-photochemical quenching (NPQ), a mechanism that converts and dissipates the harmful excess absorbed light energy into heat and protect the photosynthetic apparatus from photo-oxidative damage. NPQ includes dissipating excess light energy to heat (qE) and the reversible coupling of LHCII to photosystems (state transitions or qT), which are considered separate NPQ mechanisms. Is responsible for most of the excess light energy to heat dissipation (qE), also known as energy-dependent chlorophyll fluorescence quenching activity of chlorophyll excited states. Involved in a de-coupling and re-coupling of energy transfer to photosystem II (PSII) during qT. Binds chlorophyll a and b. Is able to sense luminal acidification of the thylakoid membranes, which occurs along with elevated electron flow caused by excess light. Establishes interactions with photosystem II (PSII) antenna components upon lumen acidification, and protonation of lumen-exposed, negatively charged residues both in LHCSR3 and in PSII antenna components. Mediates excitation energy transfer from light-harvesting complex II (LHCII) to photosystem I (PSI), rather than photosystem II (PSII), at low pH, which mimics the acidified lumen of the thylakoid membranes in high light-exposed chloroplasts. Activates PSI-dependent fluorescence quenching in addition to dissipating excitation energy in LHCII to avoid photooxidative stress under excess light. Contributes with PGRL1 to the regulation of electron flow upstream of photosystem I (PSI), and limits the accumulation of electrons on the PSI acceptor side, thus avoiding PSI photoinhibition. This Chlamydomonas reinhardtii (Chlamydomonas smithii) protein is Light-harvesting complex stress-related protein 3.1, chloroplastic.